The sequence spans 476 residues: Chromosomal replication initiator protein DnaA (476 aa).

The segment at Met-1–Arg-75 is domain I, interacts with DnaA modulators. A domain II region spans residues Arg-75 to Thr-139. The tract at residues Phe-110–Leu-141 is disordered. Residues Ala-120 to Pro-138 are compositionally biased toward basic and acidic residues. Residues Arg-140–Ser-356 are domain III, AAA+ region. Gly-184, Gly-186, Lys-187, and Thr-188 together coordinate ATP. The interval Arg-357–Gly-476 is domain IV, binds dsDNA.

It belongs to the DnaA family. As to quaternary structure, oligomerizes as a right-handed, spiral filament on DNA at oriC.

It is found in the cytoplasm. In terms of biological role, plays an essential role in the initiation and regulation of chromosomal replication. ATP-DnaA binds to the origin of replication (oriC) to initiate formation of the DNA replication initiation complex once per cell cycle. Binds the DnaA box (a 9 base pair repeat at the origin) and separates the double-stranded (ds)DNA. Forms a right-handed helical filament on oriC DNA; dsDNA binds to the exterior of the filament while single-stranded (ss)DNA is stabiized in the filament's interior. The ATP-DnaA-oriC complex binds and stabilizes one strand of the AT-rich DNA unwinding element (DUE), permitting loading of DNA polymerase. After initiation quickly degrades to an ADP-DnaA complex that is not apt for DNA replication. Binds acidic phospholipids. The polypeptide is Chromosomal replication initiator protein DnaA (Nitrosospira multiformis (strain ATCC 25196 / NCIMB 11849 / C 71)).